Here is a 172-residue protein sequence, read N- to C-terminus: Translation initiation factor IF-3 (172 aa).

The protein belongs to the IF-3 family. In terms of assembly, monomer.

Its subcellular location is the cytoplasm. IF-3 binds to the 30S ribosomal subunit and shifts the equilibrium between 70S ribosomes and their 50S and 30S subunits in favor of the free subunits, thus enhancing the availability of 30S subunits on which protein synthesis initiation begins. This is Translation initiation factor IF-3 from Bartonella quintana (strain Toulouse) (Rochalimaea quintana).